A 431-amino-acid chain; its full sequence is Argininosuccinate lyase (431 aa).

The protein belongs to the lyase 1 family. Argininosuccinate lyase subfamily.

It localises to the cytoplasm. The enzyme catalyses 2-(N(omega)-L-arginino)succinate = fumarate + L-arginine. It functions in the pathway amino-acid biosynthesis; L-arginine biosynthesis; L-arginine from L-ornithine and carbamoyl phosphate: step 3/3. The polypeptide is Argininosuccinate lyase (Xanthomonas campestris pv. campestris (strain B100)).